Here is a 361-residue protein sequence, read N- to C-terminus: Anthranilate phosphoribosyltransferase (361 aa).

5-phospho-alpha-D-ribose 1-diphosphate contacts are provided by residues glycine 101, 104–105 (GD), threonine 109, 111–114 (NIST), 129–137 (KHGNRGVSS), and serine 141. Residue glycine 101 participates in anthranilate binding. Residue serine 113 participates in Mg(2+) binding. Asparagine 132 provides a ligand contact to anthranilate. Arginine 187 is an anthranilate binding site. Positions 245 and 246 each coordinate Mg(2+).

This sequence belongs to the anthranilate phosphoribosyltransferase family. As to quaternary structure, homodimer. It depends on Mg(2+) as a cofactor.

It carries out the reaction N-(5-phospho-beta-D-ribosyl)anthranilate + diphosphate = 5-phospho-alpha-D-ribose 1-diphosphate + anthranilate. It participates in amino-acid biosynthesis; L-tryptophan biosynthesis; L-tryptophan from chorismate: step 2/5. Its function is as follows. Catalyzes the transfer of the phosphoribosyl group of 5-phosphorylribose-1-pyrophosphate (PRPP) to anthranilate to yield N-(5'-phosphoribosyl)-anthranilate (PRA). In Shewanella denitrificans (strain OS217 / ATCC BAA-1090 / DSM 15013), this protein is Anthranilate phosphoribosyltransferase.